A 418-amino-acid chain; its full sequence is Methylmalonic aciduria type A protein, mitochondrial (418 aa).

A mitochondrion-targeting transit peptide spans Met1–Leu65. Residues Gly150–Thr158, Asp292, and Ser328–Arg330 each bind GTP.

Belongs to the SIMIBI class G3E GTPase family. ArgK/MeaB subfamily. Homodimer. Interacts with MMUT (the apoenzyme form); the interaction is GTP dependent. In terms of tissue distribution, widely expressed. Highest expression is observed in liver and skeletal muscle.

The protein localises to the mitochondrion. It is found in the cytoplasm. It carries out the reaction GTP + H2O = GDP + phosphate + H(+). With respect to regulation, GTPase activity is stimulated by MMUT. In terms of biological role, GTPase, binds and hydrolyzes GTP. Involved in intracellular vitamin B12 metabolism, mediates the transport of cobalamin (Cbl) into mitochondria for the final steps of adenosylcobalamin (AdoCbl) synthesis. Functions as a G-protein chaperone that assists AdoCbl cofactor delivery from MMAB to the methylmalonyl-CoA mutase (MMUT). Plays a dual role as both a protectase and a reactivase for MMUT. Protects MMUT from progressive inactivation by oxidation by decreasing the rate of the formation of the oxidized inactive cofactor hydroxocobalamin (OH2Cbl). Additionally acts a reactivase by promoting the replacement of OH2Cbl by the active cofactor AdoCbl, restoring the activity of MMUT in the presence and hydrolysis of GTP. This is Methylmalonic aciduria type A protein, mitochondrial from Homo sapiens (Human).